We begin with the raw amino-acid sequence, 200 residues long: Putative manganese exporter (200 aa).

6 helical membrane passes run 13-33 (TEHV…AEIG), 53-73 (IIAA…WLGV), 81-101 (PDIL…WILI), 110-130 (SIST…AEIG), 150-170 (WVIV…VLIG), and 180-200 (GLIR…TAFF).

This sequence belongs to the GDT1 family.

It localises to the cell inner membrane. Its function is as follows. Involved in manganese homeostasis. May function as a manganese exporter. The sequence is that of Putative manganese exporter from Vibrio cholerae serotype O1 (strain ATCC 39541 / Classical Ogawa 395 / O395).